Consider the following 427-residue polypeptide: Endothelin-1 receptor (427 aa).

An N-terminal signal peptide occupies residues 1–20; sequence METFWLRVSFWVALVGGVIS. At 21–80 the chain is on the extracellular side; sequence DNPESYSTNLSIHVDSVTTFRGTELSFVVTTHQPTNLALPSNGSMHNYCPQQTKITSAFK. N-linked (GlcNAc...) asparagine glycans are attached at residues Asn29 and Asn62. The chain crosses the membrane as a helical span at residues 81-102; that stretch reads YINTVISCTIFIVGMVGNATLL. The Cytoplasmic portion of the chain corresponds to 103-112; the sequence is RIIYQNKCMR. Residues 113–132 form a helical membrane-spanning segment; the sequence is NGPNALIASLALGDLIYVVI. Over 133-159 the chain is Extracellular; that stretch reads DLPINVFKLLAGRWPFEQNDFGVFLCK. The cysteines at positions 158 and 239 are disulfide-linked. A helical membrane pass occupies residues 160–181; that stretch reads LFPFLQKSSVGITVLNLCALSV. Residues 182-205 are Cytoplasmic-facing; that stretch reads DRYRAVASWSRVQGIGIPLVTAIE. Residues 206–229 traverse the membrane as a helical segment; that stretch reads IVSIWILSFILAIPEAIGFVMVPF. At 230–256 the chain is on the extracellular side; it reads EYKGAQHRTCMLNATSKFMEFYQDVKD. A helical transmembrane segment spans residues 257-278; that stretch reads WWLFGFYFCMPLVCTAIFYTLM. Residues 279 to 306 are Cytoplasmic-facing; sequence TCEMLNRRNGSLRIALSEHLKQRREVAK. A helical membrane pass occupies residues 307–328; that stretch reads TVFCLVVIFALCWFPLHLSRIL. Residues 329–347 lie on the Extracellular side of the membrane; the sequence is KKTVYDEMDTNRCELLSFL. Residues 348-372 traverse the membrane as a helical segment; that stretch reads LLMDYIGINLATMNSCINPIALYFV. The Cytoplasmic segment spans residues 373-427; it reads SKKFKNCFQSCLCCCCYQSKSLMTSVPMNGTSIQWKNPEQNNHNTERSSHKDSIN. Positions 405-415 are enriched in polar residues; that stretch reads IQWKNPEQNNH. A disordered region spans residues 405–427; the sequence is IQWKNPEQNNHNTERSSHKDSIN. Basic and acidic residues predominate over residues 416–427; sequence NTERSSHKDSIN. At Ser425 the chain carries Phosphoserine.

It belongs to the G-protein coupled receptor 1 family. Endothelin receptor subfamily. EDNRA sub-subfamily. Interacts with HDAC7 and KAT5.

The protein resides in the cell membrane. Receptor for endothelin-1. Mediates its action by association with G proteins that activate a phosphatidylinositol-calcium second messenger system. The rank order of binding affinities for ET-A is: ET1 &gt; ET2 &gt;&gt; ET3. This Ovis aries (Sheep) protein is Endothelin-1 receptor.